The sequence spans 246 residues: Ribonuclease PH (246 aa).

The tract at residues 1 to 33 is disordered; it reads MTPPKLPVREGRDALTPRPVSVQRGVNPHAPGS. Residues Arg90 and 128 to 130 contribute to the phosphate site; that span reads GTR.

The protein belongs to the RNase PH family. In terms of assembly, homohexameric ring arranged as a trimer of dimers.

It catalyses the reaction tRNA(n+1) + phosphate = tRNA(n) + a ribonucleoside 5'-diphosphate. In terms of biological role, phosphorolytic 3'-5' exoribonuclease that plays an important role in tRNA 3'-end maturation. Removes nucleotide residues following the 3'-CCA terminus of tRNAs; can also add nucleotides to the ends of RNA molecules by using nucleoside diphosphates as substrates, but this may not be physiologically important. Probably plays a role in initiation of 16S rRNA degradation (leading to ribosome degradation) during starvation. The polypeptide is Ribonuclease PH (Deinococcus radiodurans (strain ATCC 13939 / DSM 20539 / JCM 16871 / CCUG 27074 / LMG 4051 / NBRC 15346 / NCIMB 9279 / VKM B-1422 / R1)).